The sequence spans 304 residues: Xylanase inhibitor protein 1 (304 aa).

Residues 1–30 (MAPLAARRPACLLALLSVAAALFLTPTALA) form the signal peptide. Positions 36 to 304 (GQVTVFWGRN…NYSSLIKYYA (269 aa)) constitute a GH18 domain. Residues Cys-55 and Cys-96 are joined by a disulfide bond. N-linked (GlcNAc...) asparagine glycosylation occurs at Asn-119. Catalysis depends on Glu-158, which acts as the Proton donor. An interaction with fungal GH11 xylanase region spans residues 178–184 (IRGGPGK). A disulfide bridge links Cys-194 with Cys-225. Positions 262–275 (HPKNVYYGVAPVAQ) are interaction with fungal GH10 xylanase. Asn-295 carries N-linked (GlcNAc...) asparagine glycosylation.

Belongs to the glycosyl hydrolase 18 family. Xylanase inhibitor subfamily. As to quaternary structure, binds to fungal GH10 and GH11 xylanases. Also forms a ternary complex with barley alpha-amylase 1 (AMY1) and insoluble starch.

Its subcellular location is the secreted. Its function is as follows. Fungal xylanase inhibitor. Possesses competitive inhibiting activity against fungal endo-1,4-beta-D-xylanases belonging to glycoside hydrolase family 10 (GH10) and family 11 (GH11). Possesses also inhibitory activity towards barley alpha-amylases. Binding to xylanases or amylases is necessary for inhibition activity. May function in plant defense against secreted fungal pathogen xylanases. Is similar to class III chitinases, but does not exhibit chitinase activity. The chain is Xylanase inhibitor protein 1 from Triticum aestivum (Wheat).